Consider the following 93-residue polypeptide: Putative pterin-4-alpha-carbinolamine dehydratase (93 aa).

Belongs to the pterin-4-alpha-carbinolamine dehydratase family.

The enzyme catalyses (4aS,6R)-4a-hydroxy-L-erythro-5,6,7,8-tetrahydrobiopterin = (6R)-L-erythro-6,7-dihydrobiopterin + H2O. The sequence is that of Putative pterin-4-alpha-carbinolamine dehydratase from Trichodesmium erythraeum (strain IMS101).